A 401-amino-acid chain; its full sequence is 8-amino-7-oxononanoate synthase (401 aa).

Arg-24 contacts substrate. Residue Gly-111–Phe-112 coordinates pyridoxal 5'-phosphate. Substrate is bound at residue His-137. Residues Ser-183, His-211, and Thr-240 each coordinate pyridoxal 5'-phosphate. N6-(pyridoxal phosphate)lysine is present on Lys-243. Residue Thr-357 coordinates substrate.

It belongs to the class-II pyridoxal-phosphate-dependent aminotransferase family. BioF subfamily. In terms of assembly, homodimer. It depends on pyridoxal 5'-phosphate as a cofactor.

The catalysed reaction is 6-carboxyhexanoyl-[ACP] + L-alanine + H(+) = (8S)-8-amino-7-oxononanoate + holo-[ACP] + CO2. Its pathway is cofactor biosynthesis; biotin biosynthesis. In terms of biological role, catalyzes the decarboxylative condensation of pimeloyl-[acyl-carrier protein] and L-alanine to produce 8-amino-7-oxononanoate (AON), [acyl-carrier protein], and carbon dioxide. The sequence is that of 8-amino-7-oxononanoate synthase from Xylella fastidiosa (strain M12).